The following is a 24-amino-acid chain: N-acyl-L-amino acid amidohydrolase (24 aa).

This sequence belongs to the peptidase M20 family. As to quaternary structure, homotetramer. It depends on Co(2+) as a cofactor.

It catalyses the reaction an N-acyl-L-amino acid + H2O = an L-alpha-amino acid + a carboxylate. It carries out the reaction an N-acetyl-L-cysteine-S-conjugate + H2O = an S-substituted L-cysteine + acetate. This Parageobacillus thermoglucosidasius (Geobacillus thermoglucosidasius) protein is N-acyl-L-amino acid amidohydrolase.